Here is a 390-residue protein sequence, read N- to C-terminus: GTPase Obg (390 aa).

In terms of domain architecture, Obg spans 1–159 (MKFVDEATIK…RELRLELLLL (159 aa)). In terms of domain architecture, OBG-type G spans 160–333 (ADVGMLGLPN…LCDELADFMD (174 aa)). Residues 166-173 (GLPNAGKS), 191-195 (FTTLI), 213-216 (DIPG), 283-286 (NKTD), and 314-316 (AAV) each bind GTP. Positions 173 and 193 each coordinate Mg(2+).

This sequence belongs to the TRAFAC class OBG-HflX-like GTPase superfamily. OBG GTPase family. As to quaternary structure, monomer. It depends on Mg(2+) as a cofactor.

It is found in the cytoplasm. In terms of biological role, an essential GTPase which binds GTP, GDP and possibly (p)ppGpp with moderate affinity, with high nucleotide exchange rates and a fairly low GTP hydrolysis rate. Plays a role in control of the cell cycle, stress response, ribosome biogenesis and in those bacteria that undergo differentiation, in morphogenesis control. This chain is GTPase Obg, found in Aliivibrio fischeri (strain MJ11) (Vibrio fischeri).